Consider the following 319-residue polypeptide: GTPase Era (319 aa).

Residues 9–196 form the Era-type G domain; sequence RSGVSLIIGR…MRTLRDLLPE (188 aa). The interval 17–24 is G1; that stretch reads GRPSSGKS. Residue 17 to 24 participates in GTP binding; the sequence is GRPSSGKS. The tract at residues 43–47 is G2; the sequence is QTTRN. The tract at residues 64–67 is G3; the sequence is DTPG. Residues 64–68 and 127–130 each bind GTP; these read DTPGY and NKVD. Residues 127–130 form a G4 region; that stretch reads NKVD. Residues 175-177 are G5; it reads ISA. A KH type-2 domain is found at 227 to 303; it reads CRDELPHALY…HISLDIRVKV (77 aa).

Belongs to the TRAFAC class TrmE-Era-EngA-EngB-Septin-like GTPase superfamily. Era GTPase family. As to quaternary structure, monomer.

It is found in the cytoplasm. The protein resides in the cell inner membrane. An essential GTPase that binds both GDP and GTP, with rapid nucleotide exchange. Plays a role in 16S rRNA processing and 30S ribosomal subunit biogenesis and possibly also in cell cycle regulation and energy metabolism. The sequence is that of GTPase Era from Treponema pallidum (strain Nichols).